Here is a 419-residue protein sequence, read N- to C-terminus: Endochitinase 2 (419 aa).

Positions 1–18 are cleaved as a signal peptide; that stretch reads MHHLRALVGVGLAGLAAG. One can recognise a GH18 domain in the interval 35–343; the sequence is AQNVVYWGQN…QQAKSILVNG (309 aa). An N-linked (GlcNAc...) asparagine glycan is attached at Asn153. Glu173 functions as the Proton donor in the catalytic mechanism. N-linked (GlcNAc...) asparagine glycosylation is found at Asn237 and Asn256. Low complexity predominate over residues 350–381; the sequence is GPPSSTPATAPAPTATTMPSSTSVSSPAASPT. The tract at residues 350–386 is disordered; it reads GPPSSTPATAPAPTATTMPSSTSVSSPAASPTGGTVP. One can recognise a CBM1 domain in the interval 383–419; that stretch reads GTVPQWGQCGGEGYSGPTQCVAPYQCVKQGDWWSSCR.

The protein belongs to the glycosyl hydrolase 18 family. Chitinase class III subfamily.

It is found in the secreted. The enzyme catalyses Random endo-hydrolysis of N-acetyl-beta-D-glucosaminide (1-&gt;4)-beta-linkages in chitin and chitodextrins.. Functionally, secreted chitinase involved in the degradation of chitin, a component of the cell walls of fungi and exoskeletal elements of some animals (including worms and arthropods). Participates in the infection process and directly acts in the penetration process of the host cuticle. The polypeptide is Endochitinase 2 (chi2) (Metarhizium robertsii (strain ARSEF 23 / ATCC MYA-3075) (Metarhizium anisopliae (strain ARSEF 23))).